The sequence spans 107 residues: Ribosome-associated factor Y (107 aa).

A disordered region spans residues 85–107 (LNKLQHKSESRRADERLKDSFEN).

Associates mainly with 70S ribosomes.

Functionally, during stationary phase, prevents 70S dimer formation, probably in order to regulate translation efficiency during transition between the exponential and the stationary phases. In addition, during environmental stress such as cold shock or excessive cell density at stationary phase, stabilizes the 70S ribosome against dissociation, inhibits translation initiation and increase translation accuracy. When normal growth conditions are restored, is quickly released from the ribosome. This is Ribosome-associated factor Y from Haemophilus influenzae (strain ATCC 51907 / DSM 11121 / KW20 / Rd).